The chain runs to 1450 residues: ABC transporter G family member 37 (1450 aa).

The region spanning 158–431 (GNALHILPNK…FEFMGFRCPA (274 aa)) is the ABC transporter 1 domain. Residue 191–198 (GPPGSGKT) participates in ATP binding. Residues 509-721 (ELLKATIDRE…AQNAISTNEF (213 aa)) enclose the ABC transmembrane type-2 1 domain. 6 helical membrane passes run 527–547 (FMYI…MTTF), 559–579 (GMIY…NGFA), 614–634 (IPIT…VIGF), 646–666 (LLLL…AGIG), 670–690 (VVSH…GGFI), and 756–776 (IGLG…TVAL). The ABC transporter 2 domain maps to 852-1104 (ISFNDVRYSV…KLIEYFEGID (253 aa)). 897 to 904 (GVSGAGKT) provides a ligand contact to ATP. Residues 1177–1391 (TQCLACLWKQ…TLYGLVASQF (215 aa)) form the ABC transmembrane type-2 2 domain. A run of 7 helical transmembrane segments spans residues 1198–1218 (AVRL…FWNL), 1236–1256 (YAAV…VVVV), 1284–1304 (LPYI…MIGF), 1311–1331 (FLWY…YGMM), 1341–1361 (IAAI…GYLI), 1372–1392 (WYCW…SQFG), and 1422–1442 (VVAV…SFAI).

This sequence belongs to the ABC transporter superfamily. ABCG family. PDR (TC 3.A.1.205) subfamily.

It localises to the membrane. Its function is as follows. May be a general defense protein. The protein is ABC transporter G family member 37 of Oryza sativa subsp. japonica (Rice).